Here is a 59-residue protein sequence, read N- to C-terminus: Large ribosomal subunit protein uL30 (59 aa).

It belongs to the universal ribosomal protein uL30 family. As to quaternary structure, part of the 50S ribosomal subunit.

This Psychrobacter cryohalolentis (strain ATCC BAA-1226 / DSM 17306 / VKM B-2378 / K5) protein is Large ribosomal subunit protein uL30.